A 431-amino-acid polypeptide reads, in one-letter code: Divalent metal cation transporter MntH (431 aa).

12 helical membrane-spanning segments follow: residues 30–50 (WSWTAFFGPALIAAVAYIDPG), 63–83 (GYTLLWVVLAANLMAMLIQTL), 106–126 (PLVWCYWVQAEIVAIATDLAE), 137–159 (LFGLSLMEGALLTGTITYLALHL), 169–189 (ILIGAMILAVAGGFILELVLS), 209–229 (YALYLAAGILGATVMPHVIYL), 257–277 (VILGMAIAGLVNLSMLAMAAA), 287–307 (VATISDSYLLLAPVVGQVTAS), 309–329 (VFGLALLLAGLSSSIVGTLSG), 341–361 (IPLWLRRLVTMLPALAVIMLG), 367–387 (ALVASQVILSFGIPFALVPLL), and 405–425 (VTGVGTVVCTLIVALNVYVLF).

It belongs to the NRAMP family.

The protein resides in the cell inner membrane. Functionally, h(+)-stimulated, divalent metal cation uptake system. This is Divalent metal cation transporter MntH from Chromohalobacter salexigens (strain ATCC BAA-138 / DSM 3043 / CIP 106854 / NCIMB 13768 / 1H11).